The primary structure comprises 225 residues: Membrane protein (225 aa).

Residues 1-20 lie on the Virion surface side of the membrane; that stretch reads MDNTTNCTLGTEQAVQLFKE. Residues 21 to 41 traverse the membrane as a helical segment; that stretch reads YNLFVTAFLLFLTILLQYGYA. At 42–51 the chain is on the intravirion side; sequence TRNKVIYILK. Residues 52 to 72 form a helical membrane-spanning segment; it reads MIVLWCFWPLNIAVGAISCIY. Topologically, residues 73 to 77 are virion surface; sequence PPNTG. A helical membrane pass occupies residues 78-98; it reads GLVAAIILTVFACLSFIGYWI. Topologically, residues 99 to 225 are intravirion; the sequence is QSFRLFKRCR…VATGGSSLYT (127 aa).

Belongs to the gammacoronaviruses M protein family. In terms of assembly, homomultimer. Interacts with envelope E protein in the budding compartment of the host cell, which is located between endoplasmic reticulum and the Golgi complex. Forms a complex with HE and S proteins. Interacts with nucleocapsid N protein. This interaction probably participates in RNA packaging into the virus.

The protein resides in the virion membrane. It is found in the host Golgi apparatus membrane. Its function is as follows. Component of the viral envelope that plays a central role in virus morphogenesis and assembly via its interactions with other viral proteins. The chain is Membrane protein from Avian infectious bronchitis virus (strain 6/82) (IBV).